The chain runs to 488 residues: Solanidine UDP-glucose glucosyltransferase 1 (488 aa).

Residue histidine 23 is the Proton acceptor of the active site. Histidine 23 contacts an anthocyanidin. Residue aspartate 127 is the Charge relay of the active site. Positions 352, 354, 369, 373, 374, and 377 each coordinate UDP-alpha-D-glucose. An anthocyanidin is bound at residue alanine 392. UDP-alpha-D-glucose contacts are provided by aspartate 393 and glutamine 394.

This sequence belongs to the UDP-glycosyltransferase family. As to expression, expressed in the shoot apical meristem (SAM) and tuber.

The enzyme catalyses solasodine + UDP-alpha-D-glucose = solasodine 3-beta-D-glucoside + UDP + H(+). The catalysed reaction is solanidine + UDP-alpha-D-glucose = solanidine 3-O-beta-D-glucopyranoside + UDP + H(+). It carries out the reaction tomatidine + UDP-alpha-D-glucose = tomatidine 3-O-beta-D-glucopyranoside + UDP + H(+). Glucosyltransferase involved in the glucosylation of the steroidal alkaloid aglycons solanidine, solasodine and tomatidine to produce their corresponding glycoalkaloids. This Solanum tuberosum (Potato) protein is Solanidine UDP-glucose glucosyltransferase 1.